The following is a 953-amino-acid chain: MEKPCTLLVHFDKGSPSMANEIKADLEGSDVAAKVDAMKRAIMLLLNGETLPHLFITVVRYVLPSEDHTIQKLLLLYLEIVDKRDVASGKVLPEMILICQNLRNNLQHPNEYIRGVTLRFLCRLNEPELLEPLIPSILANLDHRHHFIRRHALSAISAIYRLPHGDQLLPDAPEVVERALTGEQDASARRNGFLMLCACAQERAVAYLLTNAERVAEWPDLLQMAAVDLIRKVCRSPNRADKGRYIKIIISLLSAPNSAVVYESAGALVSLSSAPTAVRAAANTYCQLLSSQSDNNVKLIVLDRLHELRASHRDVMVDVVMDVLRALSSPNVDVRRKVLDLVLDLLTPRNVEEVVMYLKKEVVKTQAGDLEKGGEYRQMLVQAIHSCAVEYPEVAGSVVHLLMDFLGDTNVAAAVDVVLFVREIIETNPKLRVSMIQRLIDTFYQIRASRVCSCALWILGEYSLSLSEVESAISTIKQCLGDLPFYTVSEEGESTDASKPAQPVVNSVTVSSRRPVVLADGTYATQSAATETAISSPAVAPGSLSSTQNLRSLILSGDFFLAAVVACTLTKLVLRLEEVQPSKAEANKASTGALLIMVSILQLGQSSYLPHPIDNDSYDRIVLCVRLLCNTGDDVRKVWLQSCRQSFTKMLAEKQFRETEEMKAKAQISHAQPDDLIDFYHLKSRRGMSQLELEDAVQDDLKAATGEFTKDADDANRLNRILQLTGFSDPVYAEAYVTVHHYDIVLDVTVINRTKETLQNLCLELATMGDLKLVDRPQNYTLAPESSKQIRANIKVSSTETGVIFGNIVYETSNVMERSVVVLNDIHIDIMDYISPATCADVAFRNMWAEFEWENKVAVNTVIQDEKEFLDHIIKSTNMKCLTPPSALDGECGFIAANLYAKSVFGEDALVNISVEKQADGKLSGYIRIRSKTQGIALSLGDKITLKQKGGSS.

HEAT repeat units follow at residues 49–87 (ETLP…RDVA), 93–127 (PEMI…LNEP), 128–165 (ELLE…LPHG), 314–351 (DVMV…PRNV), and 393–430 (EVAG…TNPK).

Oligomeric complex that consists of at least the alpha, beta, beta', gamma, delta, epsilon and zeta subunits.

The protein localises to the cytoplasm. It localises to the golgi apparatus membrane. It is found in the cytoplasmic vesicle. The protein resides in the COPI-coated vesicle membrane. The coatomer is a cytosolic protein complex that binds to dilysine motifs and reversibly associates with Golgi non-clathrin-coated vesicles, which further mediate biosynthetic protein transport from the ER, via the Golgi up to the trans Golgi network. Coatomer complex is required for budding from Golgi membranes, and is essential for the retrograde Golgi-to-ER transport of dilysine-tagged proteins. The sequence is that of Coatomer subunit beta-1 from Oryza sativa subsp. japonica (Rice).